A 218-amino-acid polypeptide reads, in one-letter code: Uridine kinase (218 aa).

Gly-16 to Thr-23 serves as a coordination point for ATP.

This sequence belongs to the uridine kinase family.

The protein localises to the cytoplasm. The enzyme catalyses uridine + ATP = UMP + ADP + H(+). The catalysed reaction is cytidine + ATP = CMP + ADP + H(+). Its pathway is pyrimidine metabolism; CTP biosynthesis via salvage pathway; CTP from cytidine: step 1/3. It functions in the pathway pyrimidine metabolism; UMP biosynthesis via salvage pathway; UMP from uridine: step 1/1. This chain is Uridine kinase, found in Limosilactobacillus reuteri (strain DSM 20016) (Lactobacillus reuteri).